Here is an 818-residue protein sequence, read N- to C-terminus: Dipeptidyl-peptidase 7 (818 aa).

Residues 1-22 form the signal peptide; it reads MKLKRILLSVALLCGIGTTAMA. Residues H87, D223, and S645 each act as charge relay system in the active site.

This sequence belongs to the peptidase S46 family.

Functionally, catalyzes the removal of dipeptides from the N-terminus of oligopeptides. Most efficiently cleaves the synthetic substrate Met-Leu-methylcoumaryl-7-amide (Met-Leu-MCA), and slowly hydrolyzes Leu-Gln-, Lys-Ala-, Leu-Arg, and Ala-Asn-MCA. Is likely involved in amino acid metabolism and bacterial growth/survival of asaccharolytic P.endodontalis, that utilizes amino acids from extracellular proteinaceous nutrients as energy and carbon sources. This Porphyromonas endodontalis (strain ATCC 35406 / DSM 24491 / JCM 8526 / CCUG 16442 / BCRC 14492 / NCTC 13058 / HG 370) (Bacteroides endodontalis) protein is Dipeptidyl-peptidase 7.